A 569-amino-acid chain; its full sequence is Proline--tRNA ligase (569 aa).

This sequence belongs to the class-II aminoacyl-tRNA synthetase family. ProS type 1 subfamily. As to quaternary structure, homodimer.

The protein localises to the cytoplasm. It catalyses the reaction tRNA(Pro) + L-proline + ATP = L-prolyl-tRNA(Pro) + AMP + diphosphate. In terms of biological role, catalyzes the attachment of proline to tRNA(Pro) in a two-step reaction: proline is first activated by ATP to form Pro-AMP and then transferred to the acceptor end of tRNA(Pro). As ProRS can inadvertently accommodate and process non-cognate amino acids such as alanine and cysteine, to avoid such errors it has two additional distinct editing activities against alanine. One activity is designated as 'pretransfer' editing and involves the tRNA(Pro)-independent hydrolysis of activated Ala-AMP. The other activity is designated 'posttransfer' editing and involves deacylation of mischarged Ala-tRNA(Pro). The misacylated Cys-tRNA(Pro) is not edited by ProRS. This Halalkalibacterium halodurans (strain ATCC BAA-125 / DSM 18197 / FERM 7344 / JCM 9153 / C-125) (Bacillus halodurans) protein is Proline--tRNA ligase.